The primary structure comprises 352 residues: Rhodopsin (352 aa).

Over 1–36 the chain is Extracellular; it reads MNGTEGPDFYIPFSNKTGVVRSPFEYPQYYLAEPWK. Residues Asn-2 and Asn-15 are each glycosylated (N-linked (GlcNAc...) asparagine). A helical transmembrane segment spans residues 37 to 61; the sequence is YSALAAYMFMLIILGFPINFLTLYV. The Cytoplasmic portion of the chain corresponds to 62-73; that stretch reads TVQHKKLRSPLN. The helical transmembrane segment at 74–96 threads the bilayer; it reads YILLNLAVADLFMVLGGFTTTLY. The Extracellular segment spans residues 97 to 110; sequence TSMNGYFVFGVTGC. A disulfide bridge connects residues Cys-110 and Cys-187. The helical transmembrane segment at 111–133 threads the bilayer; that stretch reads YFEGFFATLGGEVALWCLVVLAI. The 'Ionic lock' involved in activated form stabilization signature appears at 134–136; the sequence is ERY. The Cytoplasmic portion of the chain corresponds to 134 to 152; sequence ERYIVVCKPMSNFRFGENH. Residues 153–173 traverse the membrane as a helical segment; it reads AIMGVVFTWIMALTCAAPPLV. The Extracellular segment spans residues 174-202; sequence GWSRYIPEGMQCSCGVDYYTLKPEVNNES. Residues 203-224 traverse the membrane as a helical segment; the sequence is FVIYMFVVHFAIPLAVIFFCYG. The Cytoplasmic portion of the chain corresponds to 225-252; sequence RLVCTVKEAAAQQQESATTQKAEKEVTR. A helical membrane pass occupies residues 253–274; it reads MVIIMVVSFLICWVPYASVAFY. The Extracellular segment spans residues 275 to 286; sequence IFSNQGSDFGPV. The helical transmembrane segment at 287-308 threads the bilayer; the sequence is FMTIPAFFAKSSAIYNPVIYIV. At Lys-296 the chain carries N6-(retinylidene)lysine. Residues 309 to 352 are Cytoplasmic-facing; sequence MNKQFRNCMITTLCCGKNPLGDDETATGSKTETSSVSTSQVSPA. Residues Cys-322 and Cys-323 are each lipidated (S-palmitoyl cysteine). A disordered region spans residues 332–352; that stretch reads ETATGSKTETSSVSTSQVSPA. Positions 335–352 are enriched in low complexity; the sequence is TGSKTETSSVSTSQVSPA.

The protein belongs to the G-protein coupled receptor 1 family. Opsin subfamily. Contains one covalently linked retinal chromophore. Upon light absorption, the covalently bound 11-cis-retinal is converted to all-trans-retinal. After hydrolysis of the Schiff base and release of the covalently bound all-trans-retinal, active rhodopsin is regenerated by binding of a fresh molecule of 11-cis-retinal. Expressed in rod-shaped photoreceptor cells in the retina that mediate vision in dim ligh (at protein level).

It is found in the membrane. The protein localises to the cell projection. It localises to the cilium. The protein resides in the photoreceptor outer segment. Functionally, photoreceptor required for image-forming vision at low light intensity. Required for photoreceptor cell viability after birth. Light-induced isomerization of 11-cis to all-trans retinal triggers a conformational change that activates signaling via G-proteins. Subsequent receptor phosphorylation mediates displacement of the bound G-protein alpha subunit by arrestin and terminates signaling. The sequence is that of Rhodopsin (RHO) from Alligator mississippiensis (American alligator).